The chain runs to 361 residues: Inner kinetochore subunit CNN1 (361 aa).

Positions 1 to 22 (MSTPRKAAGNNENTEVSEIRTP) are disordered. Serine 2 carries the post-translational modification Phosphoserine; by CDK1. Residue threonine 14 is modified to Phosphothreonine; by CDK1 and MPS1. Serine 17 carries the post-translational modification Phosphoserine; by CDK1 and MPS1. Residues threonine 21 and threonine 42 each carry the phosphothreonine; by CDK1 modification. Position 50 is a phosphoserine; by CDK1 and MPS1 (serine 50). The residue at position 52 (serine 52) is a Phosphoserine; by CDK1. Threonine 53 bears the Phosphothreonine; by MPS1 mark. Phosphoserine; by CDK1 is present on serine 55. Residues 60–84 (NKDPNEVRSFLQDLSQVLARKSQGN) are interacts with the NDC80 complex subunits SPC24 and SPC25 and with the KNL1 complex. Serine 74 carries the post-translational modification Phosphoserine; by CDK1 and MPS1. Phosphothreonine; by MPS1 occurs at positions 86 and 88. At threonine 91 the chain carries Phosphothreonine; by CDK1 and MPS1. Positions 103 to 132 (EESQPEENELLRSRSEKLTDNNIGNETQPD) are disordered. Basic and acidic residues predominate over residues 111–121 (ELLRSRSEKLT). Phosphoserine; by CDK1 is present on serine 115. Positions 122–132 (DNNIGNETQPD) are enriched in polar residues. Threonine 129 carries the post-translational modification Phosphothreonine; by CDK1 and MPS1. Threonine 134 is modified (phosphothreonine; by MPS1). Serine 135 bears the Phosphoserine; by MPS1 mark. The residue at position 139 (threonine 139) is a Phosphothreonine; by CDK1 and MPS1. Phosphoserine; by MPS1 is present on serine 153. Position 174 is a phosphothreonine; by MPS1 (threonine 174). Serine 177 bears the Phosphoserine; by CDK1 mark. Threonine 191 is modified (phosphothreonine; by CDK1). Serine 192 bears the Phosphoserine; by CDK1 mark. A disordered region spans residues 193–255 (PSIGMDQVDE…SDENLDDIGN (63 aa)). The span at 219–254 (PLSEDLPSDDKEETEEAENEDYSFENTSDENLDDIG) shows a compositional bias: acidic residues. Phosphoserine; by CDK1 is present on serine 268. Serine 269 bears the Phosphoserine; by MPS1 and IPL1 mark.

This sequence belongs to the CENP-T/CNN1 family. Component of the inner kinetochore constitutive centromere-associated network (CCAN) (also known as central kinetochore CTF19 complex in yeast), which is composed of at least AME1, CHL4, CNN1, CTF3, CTF19, IML3, MCM16, MCM21, MCM22, MHF1, MHF2, MIF2, NKP1, NKP2, OKP1 and WIP1. Interacts (via N-terminus) with the outer kinetochore NDC80 complex subunits SPC24 (via C-terminus) and SPC25 (via C-terminus); the interaction is direct and contributes to the correct spatiotemporal organization of the KMN network. Interacts with outer kinetochore MIS12 complex subunit NNF1. Interacts (via N-terminus) with the KNL1 complex. In terms of processing, phosphorylation of the C-terminus by MPS1 kinase regulates interaction with the outer kinetochore Ndc80 complex. Phosphorylation levels rise from S-phase and through metaphase, the protein is thendephosphorylated in anaphase.

It is found in the nucleus. The protein resides in the chromosome. The protein localises to the centromere. Its subcellular location is the kinetochore. In terms of biological role, component of the kinetochore, a multiprotein complex that assembles on centromeric DNA and attaches chromosomes to spindle microtubules, mediating chromosome segregation and sister chromatid segregation during meiosis and mitosis. Component of the inner kinetochore constitutive centromere-associated network (CCAN), which serves as a structural platform for outer kinetochore assembly. Modulates outer kinetochore KMN network activity by regulating interactions within the network. This is Inner kinetochore subunit CNN1 (CNN1) from Saccharomyces cerevisiae (strain ATCC 204508 / S288c) (Baker's yeast).